A 136-amino-acid polypeptide reads, in one-letter code: Prefoldin subunit alpha (136 aa).

It belongs to the prefoldin subunit alpha family. Heterohexamer of two alpha and four beta subunits.

The protein resides in the cytoplasm. Functionally, molecular chaperone capable of stabilizing a range of proteins. Seems to fulfill an ATP-independent, HSP70-like function in archaeal de novo protein folding. This chain is Prefoldin subunit alpha, found in Pyrobaculum arsenaticum (strain DSM 13514 / JCM 11321 / PZ6).